The sequence spans 586 residues: Phosphomethylpyrimidine synthase (586 aa).

A disordered region spans residues Met1–Pro59. Residues Val22–Glu39 are compositionally biased toward basic and acidic residues. Substrate is bound by residues Asn193, Met222, Tyr251, His287, Ser307–Gly309, Asp348–Arg351, and Glu387. His391 is a binding site for Zn(2+). A substrate-binding site is contributed by Tyr414. His455 is a binding site for Zn(2+). Residues Cys535, Cys538, and Cys543 each coordinate [4Fe-4S] cluster.

This sequence belongs to the ThiC family. [4Fe-4S] cluster is required as a cofactor.

The catalysed reaction is 5-amino-1-(5-phospho-beta-D-ribosyl)imidazole + S-adenosyl-L-methionine = 4-amino-2-methyl-5-(phosphooxymethyl)pyrimidine + CO + 5'-deoxyadenosine + formate + L-methionine + 3 H(+). It functions in the pathway cofactor biosynthesis; thiamine diphosphate biosynthesis. Functionally, catalyzes the synthesis of the hydroxymethylpyrimidine phosphate (HMP-P) moiety of thiamine from aminoimidazole ribotide (AIR) in a radical S-adenosyl-L-methionine (SAM)-dependent reaction. This Bacillus cereus (strain ATCC 14579 / DSM 31 / CCUG 7414 / JCM 2152 / NBRC 15305 / NCIMB 9373 / NCTC 2599 / NRRL B-3711) protein is Phosphomethylpyrimidine synthase.